We begin with the raw amino-acid sequence, 209 residues long: uncharacterized protein (209 aa).

An N-terminal signal peptide occupies residues 1–17 (MKRLVTGLLALSLFLAA). The segment at 17–105 (ACGQDSDQQK…SNNQANNNQK (89 aa)) is disordered. Cys-18 carries the N-palmitoyl cysteine lipid modification. Cys-18 is lipidated: S-diacylglycerol cysteine. A compositionally biased stretch (basic and acidic residues) spans 23–70 (DQQKDGNKEKDDKAKTEQQDKKTNDSSKDKKDNKDDSKDVNKDNKDNS). Over residues 71-105 (ANDNQQQSNSNATNNDQNQTNNNQSSNNQANNNQK) the composition is skewed to low complexity.

The protein resides in the cell membrane. This is an uncharacterized protein from Staphylococcus aureus (strain COL).